A 152-amino-acid polypeptide reads, in one-letter code: Small ribosomal subunit protein uS19z (152 aa).

This sequence belongs to the universal ribosomal protein uS19 family.

The protein resides in the cytoplasm. This Arabidopsis thaliana (Mouse-ear cress) protein is Small ribosomal subunit protein uS19z (RPS15B).